The primary structure comprises 215 residues: Oligoribonuclease (215 aa).

Positions 5 to 170 constitute an Exonuclease domain; sequence LVWIDCEMTG…ADIHESIREL (166 aa). Tyrosine 127 is an active-site residue. Residues 196–215 are disordered; the sequence is LSDGAGAQEETDSAEAPQSG.

The protein belongs to the oligoribonuclease family.

The protein resides in the cytoplasm. Its function is as follows. 3'-to-5' exoribonuclease specific for small oligoribonucleotides. The sequence is that of Oligoribonuclease from Mycobacterium bovis (strain BCG / Pasteur 1173P2).